The sequence spans 152 residues: Calmodulin-like protein 2 (152 aa).

4 EF-hand domains span residues 1-36 (MDRGELSRVFQMFDKNGDGKIAKNELKDFFKSVGIM), 37-72 (VPENEINEMIAKMDVNGDGAMDIDEFGSLYQEMVEE), 74-109 (EEEEDMREAFRVFDQNGDGFITDEELRSVLASMGLK), and 112-147 (RTLEDCKKMISKVDVDGDGMVNFKEFKQMMRGGGFA). Ca(2+)-binding residues include Asp-14, Asn-16, Asp-18, Lys-20, Glu-25, Asp-50, Asn-52, Asp-54, Glu-61, Asp-87, Asn-89, Asp-91, Glu-98, Asp-125, Asp-127, Asp-129, Met-131, and Glu-136.

This sequence belongs to the calmodulin family.

In terms of biological role, potential calcium sensor that is required for pollen tube attraction for ovule fertilization. The polypeptide is Calmodulin-like protein 2 (CML2) (Arabidopsis thaliana (Mouse-ear cress)).